Reading from the N-terminus, the 178-residue chain is Putative type II secretion system M-type protein YghD (178 aa).

At 1–39 (MLRDKFIHYFQQWRERQLSRGEHWLAQHLAGRSPREKGM) the chain is on the cytoplasmic side. The chain crosses the membrane as a helical span at residues 40-60 (LLAAVVFLFSVGYYVLIWQPL). The Periplasmic segment spans residues 61–178 (SERIEQQETI…NVQRLEFGRG (118 aa)).

This sequence belongs to the GSP M family.

Its subcellular location is the cell inner membrane. Functionally, involved in a type II secretion system (T2SS, formerly general secretion pathway, GSP) for the export of folded proteins across the outer membrane. This chain is Putative type II secretion system M-type protein YghD (yghD), found in Escherichia coli (strain K12).